Reading from the N-terminus, the 576-residue chain is Septation ring formation regulator EzrA (576 aa).

The Extracellular segment spans residues 1–7 (MSSTVII). The chain crosses the membrane as a helical span at residues 8–26 (LIVVLLVILVAFYAFAILM). Residues 27-576 (RKKTEDRILA…FKNKPTPDYL (550 aa)) are Cytoplasmic-facing. 3 coiled-coil regions span residues 105–134 (RARE…VAQL), 254–305 (ENVN…FERE), and 356–402 (GYQE…IEKN).

It belongs to the EzrA family.

It localises to the cell membrane. Negative regulator of FtsZ ring formation; modulates the frequency and position of FtsZ ring formation. Inhibits FtsZ ring formation at polar sites. Interacts either with FtsZ or with one of its binding partners to promote depolymerization. The sequence is that of Septation ring formation regulator EzrA from Lactococcus lactis subsp. cremoris (strain MG1363).